Consider the following 77-residue polypeptide: MQKLTILLLVAAVLMSTQALIKGGGEKRPKEKIKFLSKRKTTAESWWEGECSGWSVYCTQHSECCSGECTGNYCELF.

Positions 1-19 (MQKLTILLLVAAVLMSTQA) are cleaved as a signal peptide. Residues 20-37 (LIKGGGEKRPKEKIKFLS) constitute a propeptide that is removed on maturation. Intrachain disulfides connect Cys-51–Cys-65, Cys-58–Cys-69, and Cys-64–Cys-74.

The protein belongs to the conotoxin O2 superfamily. In terms of tissue distribution, expressed by the venom duct.

It localises to the secreted. This Conus ventricosus (Mediterranean cone) protein is Conotoxin VnMEKL-0223.